Here is a 401-residue protein sequence, read N- to C-terminus: Methionine import ATP-binding protein MetN (401 aa).

One can recognise an ABC transporter domain in the interval 6–248 (ITFDHVVKEF…PQQPVTKRFI (243 aa)). 45 to 52 (GYSGAGKS) lines the ATP pocket.

Belongs to the ABC transporter superfamily. Methionine importer (TC 3.A.1.24) family. As to quaternary structure, the complex is composed of two ATP-binding proteins (MetN), two transmembrane proteins (MetI) and a solute-binding protein (MetQ).

It is found in the cell membrane. It catalyses the reaction L-methionine(out) + ATP + H2O = L-methionine(in) + ADP + phosphate + H(+). It carries out the reaction D-methionine(out) + ATP + H2O = D-methionine(in) + ADP + phosphate + H(+). Its function is as follows. Part of the ABC transporter complex MetNIQ involved in methionine import. Responsible for energy coupling to the transport system. The sequence is that of Methionine import ATP-binding protein MetN from Bifidobacterium longum (strain NCC 2705).